The chain runs to 341 residues: L-threonine 3-dehydrogenase (341 aa).

C38 serves as a coordination point for Zn(2+). Residues T40 and H43 each act as charge relay system in the active site. Positions 63, 64, 93, 96, 99, and 107 each coordinate Zn(2+). NAD(+) is bound by residues I175, D195, R200, 262-264 (LGI), and 286-287 (IY).

Belongs to the zinc-containing alcohol dehydrogenase family. As to quaternary structure, homotetramer. Requires Zn(2+) as cofactor.

The protein localises to the cytoplasm. The catalysed reaction is L-threonine + NAD(+) = (2S)-2-amino-3-oxobutanoate + NADH + H(+). Its pathway is amino-acid degradation; L-threonine degradation via oxydo-reductase pathway; glycine from L-threonine: step 1/2. Functionally, catalyzes the NAD(+)-dependent oxidation of L-threonine to 2-amino-3-ketobutyrate. The chain is L-threonine 3-dehydrogenase from Shewanella woodyi (strain ATCC 51908 / MS32).